The primary structure comprises 66 residues: Phylloseptin-Az2 (66 aa).

Residues methionine 1–cysteine 22 form the signal peptide. The propeptide occupies glutamate 23–glutamate 44. Residues glutamate 24–lysine 45 are disordered. The span at glutamate 31 to lysine 41 shows a compositional bias: acidic residues. Residue phenylalanine 65 is modified to Phenylalanine amide.

In terms of tissue distribution, expressed by the skin glands.

The protein resides in the secreted. Functionally, has antibacterial activity against the Gram-negative bacteria E.coli ATCC 11775 (MIC=7.2 uM), and the Gram-positive bacteria S.aureus ATCC 12600 (MIC=3.6 uM) and M.luteus ATCC 49732 (MIC=1.8 uM). Does not inhibit the growth of the fungus C.albicans. This is Phylloseptin-Az2 from Pithecopus azureus (Orange-legged monkey tree frog).